The chain runs to 585 residues: 2-succinyl-5-enolpyruvyl-6-hydroxy-3-cyclohexene-1-carboxylate synthase (585 aa).

The protein belongs to the TPP enzyme family. MenD subfamily. In terms of assembly, homodimer. It depends on Mg(2+) as a cofactor. Mn(2+) serves as cofactor. Thiamine diphosphate is required as a cofactor.

The catalysed reaction is isochorismate + 2-oxoglutarate + H(+) = 5-enolpyruvoyl-6-hydroxy-2-succinyl-cyclohex-3-ene-1-carboxylate + CO2. The protein operates within quinol/quinone metabolism; 1,4-dihydroxy-2-naphthoate biosynthesis; 1,4-dihydroxy-2-naphthoate from chorismate: step 2/7. Its pathway is cofactor biosynthesis; phylloquinone biosynthesis. Its function is as follows. Catalyzes the thiamine diphosphate-dependent decarboxylation of 2-oxoglutarate and the subsequent addition of the resulting succinic semialdehyde-thiamine pyrophosphate anion to isochorismate to yield 2-succinyl-5-enolpyruvyl-6-hydroxy-3-cyclohexene-1-carboxylate (SEPHCHC). The sequence is that of 2-succinyl-5-enolpyruvyl-6-hydroxy-3-cyclohexene-1-carboxylate synthase from Crocosphaera subtropica (strain ATCC 51142 / BH68) (Cyanothece sp. (strain ATCC 51142)).